Consider the following 677-residue polypeptide: DNA-directed RNA polymerase subunit beta' (677 aa).

Residues cysteine 69, cysteine 71, cysteine 87, and cysteine 90 each contribute to the Zn(2+) site. Residues aspartate 489, aspartate 491, and aspartate 493 each contribute to the Mg(2+) site.

The protein belongs to the RNA polymerase beta' chain family. RpoC1 subfamily. As to quaternary structure, in plastids the minimal PEP RNA polymerase catalytic core is composed of four subunits: alpha, beta, beta', and beta''. When a (nuclear-encoded) sigma factor is associated with the core the holoenzyme is formed, which can initiate transcription. Mg(2+) is required as a cofactor. Requires Zn(2+) as cofactor.

The protein localises to the plastid. Its subcellular location is the chloroplast. The catalysed reaction is RNA(n) + a ribonucleoside 5'-triphosphate = RNA(n+1) + diphosphate. Its function is as follows. DNA-dependent RNA polymerase catalyzes the transcription of DNA into RNA using the four ribonucleoside triphosphates as substrates. In Daucus carota (Wild carrot), this protein is DNA-directed RNA polymerase subunit beta'.